The following is a 393-amino-acid chain: Ninja-family protein 1 (393 aa).

Disordered stretches follow at residues 1–27 (MEGFSRDLLCGIGKGDAPPPEKRPGQL) and 155–200 (NDDW…KEMN). The span at 156–170 (DDWKKRKEAQSLKRL) shows a compositional bias: basic and acidic residues.

The protein belongs to the Ninja family.

It is found in the nucleus. The chain is Ninja-family protein 1 from Zea mays (Maize).